A 742-amino-acid chain; its full sequence is Zinc finger protein 280C (742 aa).

Glycyl lysine isopeptide (Lys-Gly) (interchain with G-Cter in SUMO2) cross-links involve residues K10, K23, K42, K65, K85, K123, and K135. A compositionally biased stretch (polar residues) spans 138–168; sequence FTKTSPQEDSGACSVSQSDSTQDIPSSNILQ. The tract at residues 138 to 243 is disordered; the sequence is FTKTSPQEDS…QSAPGSSSLR (106 aa). Residues K180, K186, and K193 each participate in a glycyl lysine isopeptide (Lys-Gly) (interchain with G-Cter in SUMO2) cross-link. The span at 182 to 191 shows a compositional bias: polar residues; the sequence is PSTSKVNSVN. Over residues 200–222 the composition is skewed to low complexity; the sequence is SISETRPCSSSSSQTAPSGASSQ. Positions 223–243 are enriched in polar residues; sequence TVLSNVNTSSVQSAPGSSSLR. 5 C2H2-type zinc fingers span residues 323–345, 360–383, 390–413, 420–443, and 477–499; these read FKCF…MKHH, TTCQ…ESTH, TICK…KDTH, YICQ…RSSH, and YRCP…KLEH. Residues 523–578 show a composition bias toward low complexity; the sequence is LGSSQSRASSPPSSTIPSTSLQLSVPKSKSTTTKNNSKVSANKATTTSPQTVATTT. A disordered region spans residues 523 to 608; the sequence is LGSSQSRASS…YKQKRQRTRK (86 aa). Residues 579 to 592 are compositionally biased toward polar residues; it reads GKPSASKPGTGTTK. K580 participates in a covalent cross-link: Glycyl lysine isopeptide (Lys-Gly) (interchain with G-Cter in SUMO2). The segment covering 593 to 608 has biased composition (basic residues); it reads SKAKPSYKQKRQRTRK.

The protein localises to the nucleus. May function as a transcription factor. The polypeptide is Zinc finger protein 280C (Znf280c) (Mus musculus (Mouse)).